A 130-amino-acid chain; its full sequence is Small ribosomal subunit protein uS9 (130 aa).

Residues Thr-105–Arg-130 form a disordered region. Over residues Lys-111–Arg-130 the composition is skewed to basic residues.

The protein belongs to the universal ribosomal protein uS9 family.

The chain is Small ribosomal subunit protein uS9 from Syntrophomonas wolfei subsp. wolfei (strain DSM 2245B / Goettingen).